The sequence spans 411 residues: GTPase Obg (411 aa).

The Obg domain maps to Met1–Leu157. Residues Ala20–Val45 form a disordered region. Residues Gly33–Gly43 are compositionally biased toward gly residues. Residues Ser158 to Arg330 enclose the OBG-type G domain. Residues Gly164–Ser171, Phe189–Thr193, Asp212–Gly215, Asn276–Asp279, and Ala311–Leu313 each bind GTP. The Mg(2+) site is built by Ser171 and Thr191. The OCT domain occupies Val335–Arg411.

The protein belongs to the TRAFAC class OBG-HflX-like GTPase superfamily. OBG GTPase family. In terms of assembly, monomer. Mg(2+) serves as cofactor.

Its subcellular location is the cytoplasm. Its function is as follows. An essential GTPase which binds GTP, GDP and possibly (p)ppGpp with moderate affinity, with high nucleotide exchange rates and a fairly low GTP hydrolysis rate. Plays a role in control of the cell cycle, stress response, ribosome biogenesis and in those bacteria that undergo differentiation, in morphogenesis control. This Rubrobacter xylanophilus (strain DSM 9941 / JCM 11954 / NBRC 16129 / PRD-1) protein is GTPase Obg.